Reading from the N-terminus, the 158-residue chain is Protein Smg homolog (158 aa).

Belongs to the Smg family.

In Shewanella sp. (strain MR-4), this protein is Protein Smg homolog.